The following is a 113-amino-acid chain: uncharacterized protein (113 aa).

Positions 1–22 (MCRFPTFLLIAIAITMLPTILS) are cleaved as a signal peptide. N-linked (GlcNAc...) asparagine glycosylation occurs at Asn-47.

Its subcellular location is the secreted. This is an uncharacterized protein from Caenorhabditis elegans.